Consider the following 75-residue polypeptide: Probable pilin MJ1469 (75 aa).

Residues 1-11 constitute a propeptide that is removed on maturation; the sequence is MKPKKIISNKA. Positions 12–20 match the QXSXEXXXL motif; that stretch reads QISLELALL.

Post-translationally, the N-terminus is cleaved by the prepilin peptidase EppA, which recognizes the class III signal sequence.

It localises to the secreted. The protein localises to the cell surface. Its subcellular location is the fimbrium. The polypeptide is Probable pilin MJ1469 (Methanocaldococcus jannaschii (strain ATCC 43067 / DSM 2661 / JAL-1 / JCM 10045 / NBRC 100440) (Methanococcus jannaschii)).